We begin with the raw amino-acid sequence, 560 residues long: Alpha-keto-acid decarboxylase (560 aa).

Residue glutamate 61 coordinates thiamine diphosphate. Positions threonine 396 to valine 478 are thiamine pyrophosphate binding. Aspartate 446, asparagine 473, and glycine 475 together coordinate Mg(2+).

Belongs to the TPP enzyme family. The cofactor is a metal cation. Requires thiamine diphosphate as cofactor.

Functionally, decarboxylates branched-chain and aromatic alpha-keto acids to aldehydes. In Mycobacterium tuberculosis (strain CDC 1551 / Oshkosh), this protein is Alpha-keto-acid decarboxylase (kdc).